A 210-amino-acid chain; its full sequence is DNA-directed RNA polymerases I, II, and III subunit RPABC1 (210 aa).

The residue at position 1 (methionine 1) is an N-acetylmethionine. Lysine 81 is covalently cross-linked (Glycyl lysine isopeptide (Lys-Gly) (interchain with G-Cter in SUMO2)).

It belongs to the archaeal Rpo5/eukaryotic RPB5 RNA polymerase subunit family. Component of the RNA polymerase I (Pol I), RNA polymerase II (Pol II) and RNA polymerase III (Pol III) complexes consisting of at least 13, 12 and 17 subunits, respectively. Pol I complex consists of a ten-subunit catalytic core composed of POLR1A/RPA1, POLR1B/RPA2, POLR1C/RPAC1, POLR1D/RPAC2, POLR1H/RPA12, POLR2E/RPABC1, POLR2F/RPABC2, POLR2H/RPABC3, POLR2K/RPABC4 and POLR2L/RPABC5; a mobile stalk subunit POLR1F/RPA43 protruding from the core and additional subunits homologous to general transcription factors POLR1E/RPA49 and POLR1G/RPA34. Part of Pol I pre-initiation complex (PIC), in which Pol I core assembles with RRN3 and promoter-bound UTBF and SL1/TIF-IB complex. Pol II complex contains a ten-subunit catalytic core composed of POLR2A/RPB1, POLR2B/RPB2, POLR2C/RPB3, POLR2I/RPB9, POLR2J/RPB11, POLR2E/RPABC1, POLR2F/RPABC2, POLR2H/RPABC3, POLR2K/RPABC4 and POLR2L/RPABC5 and a mobile stalk composed of two subunits POLR2D/RPB4 and POLR2G/RPB7. Part of Pol II(G) complex, in which Pol II core associates with an additional subunit POLR2M; unlike conventional Pol II, Pol II(G) functions as a transcriptional repressor. Part of TBP-based Pol II pre-initiation complex (PIC), in which Pol II core assembles with general transcription factors and other specific initiation factors including GTF2E1, GTF2E2, GTF2F1, GTF2F2, TCEA1, ERCC2, ERCC3, GTF2H2, GTF2H3, GTF2H4, GTF2H5, GTF2A1, GTF2A2, GTF2B and TBP; this large multi-subunit PIC complex mediates DNA unwinding and targets Pol II core to the transcription start site where the first phosphodiester bond forms. In Pol II complex, this subunit is present in 2-fold molar excess over the other subunits. Pol III complex consists of a ten-subunit catalytic core composed of POLR3A/RPC1, POLR3B/RPC2, POLR1C/RPAC1, POLR1D/RPAC2, POLR3K/RPC10, POLR2E/RPABC1, POLR2F/RPABC2, POLR2H/RPABC3, POLR2K/RPABC4 and POLR2L/RPABC5; a mobile stalk composed of two subunits POLR3H/RPC8 and CRCP/RPC9, protruding from the core and functioning primarily in transcription initiation; and additional subunits homologous to general transcription factors of the RNA polymerase II machinery, POLR3C/RPC3-POLR3F/RPC6-POLR3G/RPC7 heterotrimer required for transcription initiation and POLR3D/RPC4-POLR3E/RPC5 heterodimer involved in both transcription initiation and termination. Component of the PAQosome complex which is responsible for the biogenesis of several protein complexes and which consists of R2TP complex members RUVBL1, RUVBL2, RPAP3 and PIH1D1, URI complex members PFDN2, PFDN6, PDRG1, UXT and URI1 as well as ASDURF, POLR2E and DNAAF10/WDR92. Interacts with URI1. In terms of assembly, (Microbial infection) Interacts with HBV protein X.

It localises to the nucleus. The protein resides in the nucleolus. DNA-dependent RNA polymerase catalyzes the transcription of DNA into RNA using the four ribonucleoside triphosphates as substrates. Common component of RNA polymerases I, II and III which synthesize ribosomal RNA precursors, mRNA precursors and many functional non-coding RNAs, and small RNAs, such as 5S rRNA and tRNAs, respectively. Pol II is the central component of the basal RNA polymerase II transcription machinery. Pols are composed of mobile elements that move relative to each other. In Pol II, POLR2E/RPABC1 is part of the lower jaw surrounding the central large cleft and thought to grab the incoming DNA template. In Homo sapiens (Human), this protein is DNA-directed RNA polymerases I, II, and III subunit RPABC1.